The sequence spans 623 residues: Negative regulator of PDR1-mediated fluconazole resistance JJJ1 (623 aa).

Residues C4 to K70 enclose the J domain. Residues Y363–H387 form a C2H2-type zinc finger. Disordered regions lie at residues Q448–N476, G499–K581, and S599–K623. Over residues D453–D466 the composition is skewed to acidic residues. The segment covering G499 to A508 has biased composition (polar residues). A compositionally biased stretch (basic and acidic residues) spans E525–T538. Composition is skewed to basic residues over residues K553–K564 and K612–K623.

The protein localises to the nucleus. Its function is as follows. Acts as a negative regulator of fluconazole resistance, primarily through down-regulation of the ABC transporter gene CDR1 via inactivation of the PDR1 transcriptional pathway. The sequence is that of Negative regulator of PDR1-mediated fluconazole resistance JJJ1 from Candida glabrata (strain ATCC 2001 / BCRC 20586 / JCM 3761 / NBRC 0622 / NRRL Y-65 / CBS 138) (Yeast).